We begin with the raw amino-acid sequence, 133 residues long: Transcriptional regulator MraZ (133 aa).

SpoVT-AbrB domains lie at 5–47 (TYEH…SKDD) and 76–119 (TVEI…SKNK).

This sequence belongs to the MraZ family. As to quaternary structure, forms oligomers.

It localises to the cytoplasm. It is found in the nucleoid. In Mycoplasma mycoides subsp. mycoides SC (strain CCUG 32753 / NCTC 10114 / PG1), this protein is Transcriptional regulator MraZ.